The sequence spans 368 residues: Seipin-1 (368 aa).

3 consecutive transmembrane segments (helical) span residues 26–46 (WFMV…VVLS), 101–121 (VMVL…SLYV), and 292–312 (LCVW…LWCF). The segment at 344 to 368 (MERRRRERRNQPRRRNFATTQKSYT) is disordered. The segment covering 346-359 (RRRRERRNQPRRRN) has biased composition (basic residues).

This sequence belongs to the seipin family. As to expression, expressed in seeds and young seedlings. Not detected in leaves.

It is found in the endoplasmic reticulum membrane. Its function is as follows. Involved in lipid metabolism and lipid droplet (LD) morphology, number, and size. Facilitates the formation of large-sized LDs and modulates triacylglycerol accumulation. Induces probably a reorganization of the endoplasmic reticulum into LD-forming domains. This is Seipin-1 from Arabidopsis thaliana (Mouse-ear cress).